Here is a 401-residue protein sequence, read N- to C-terminus: Probable sodium/metabolite cotransporter BASS1, chloroplastic (401 aa).

The transit peptide at 1-70 (MASAISLSLL…RRSRFDFVPR (70 aa)) directs the protein to the chloroplast. 9 consecutive transmembrane segments (helical) span residues 92–112 (FVGEAVSTAFPIWVSLGCLLG), 122–142 (VTPNWTIVGLTITMLGMGMTL), 156–176 (ELFAGFLLQYSVMPLSAFFVS), 187–207 (AGLILVGCCPGGTASNIVTYI), 212–232 (VALSVLMTAASTVSAVIMTPL), 247–267 (LGLLMSTLQVVLLPVLAGAFL), 278–298 (VSPVMPPIAVGTVAILCGYAI), 311–331 (QVVLASCLLHISGFLFGYLFS), and 371–391 (VPCAVSSVCHSILGSVLAGIW).

This sequence belongs to the bile acid:sodium symporter (BASS) (TC 2.A.28) family.

Its subcellular location is the membrane. The protein localises to the plastid. The protein resides in the chloroplast envelope. Its function is as follows. May function as sodium-coupled metabolite transporter across the chloroplast envelope. The chain is Probable sodium/metabolite cotransporter BASS1, chloroplastic (BASS1) from Arabidopsis thaliana (Mouse-ear cress).